The chain runs to 376 residues: Glutamate 5-kinase (376 aa).

K23 lines the ATP pocket. Substrate is bound by residues S63, D150, and N162. ATP contacts are provided by residues 182–183 (SD) and 222–228 (TGGMASK). In terms of domain architecture, PUA spans 284–358 (GGALRIDAGA…GKQTAQLPEG (75 aa)).

Belongs to the glutamate 5-kinase family.

It is found in the cytoplasm. The catalysed reaction is L-glutamate + ATP = L-glutamyl 5-phosphate + ADP. Its pathway is amino-acid biosynthesis; L-proline biosynthesis; L-glutamate 5-semialdehyde from L-glutamate: step 1/2. In terms of biological role, catalyzes the transfer of a phosphate group to glutamate to form L-glutamate 5-phosphate. This Corynebacterium diphtheriae (strain ATCC 700971 / NCTC 13129 / Biotype gravis) protein is Glutamate 5-kinase.